A 367-amino-acid chain; its full sequence is Quinolinate synthase (367 aa).

Residues histidine 45 and serine 62 each coordinate iminosuccinate. [4Fe-4S] cluster is bound at residue cysteine 109. Residues 140–142 and serine 161 each bind iminosuccinate; that span reads YVN. Cysteine 229 serves as a coordination point for [4Fe-4S] cluster. Iminosuccinate is bound by residues 255–257 and threonine 272; that span reads HPE. [4Fe-4S] cluster is bound at residue cysteine 319.

The protein belongs to the quinolinate synthase family. Type 3 subfamily. [4Fe-4S] cluster is required as a cofactor.

It localises to the cytoplasm. The catalysed reaction is iminosuccinate + dihydroxyacetone phosphate = quinolinate + phosphate + 2 H2O + H(+). It functions in the pathway cofactor biosynthesis; NAD(+) biosynthesis; quinolinate from iminoaspartate: step 1/1. Its function is as follows. Catalyzes the condensation of iminoaspartate with dihydroxyacetone phosphate to form quinolinate. The sequence is that of Quinolinate synthase from Geobacillus kaustophilus (strain HTA426).